The chain runs to 263 residues: Putative hydro-lyase Pden_0321 (263 aa).

It belongs to the D-glutamate cyclase family.

The sequence is that of Putative hydro-lyase Pden_0321 from Paracoccus denitrificans (strain Pd 1222).